The sequence spans 142 residues: Interleukin-3 (142 aa).

Residues 1-18 (MSHLPILLLLLLVSPGLQ) form the signal peptide. N-linked (GlcNAc...) asparagine glycans are attached at residues Asn33, Asn88, and Asn108. A disulfide bond links Cys34 and Cys102.

This sequence belongs to the IL-3 family. In terms of assembly, monomer. In terms of tissue distribution, activated T-cells, mast cells, natural killer cells.

It is found in the secreted. Its function is as follows. Granulocyte/macrophage colony-stimulating factors are cytokines that act in hematopoiesis by controlling the production, differentiation, and function of 2 related white cell populations of the blood, the granulocytes and the monocytes-macrophages. In terms of biological role, this CSF induces granulocytes, macrophages, mast cells, stem cells, erythroid cells, eosinophils and megakaryocytes. The protein is Interleukin-3 (IL3) of Saguinus oedipus (Cotton-top tamarin).